We begin with the raw amino-acid sequence, 728 residues long: Catalase-peroxidase (728 aa).

Residues 97 to 225 (WHSAGTYRIA…LAAVMMGLIY (129 aa)) constitute a cross-link (tryptophyl-tyrosyl-methioninium (Trp-Tyr) (with M-251)). H98 serves as the catalytic Proton acceptor. The tryptophyl-tyrosyl-methioninium (Tyr-Met) (with W-97) cross-link spans 225–251 (YVNPEGVDGNPDPLRTAQDIRITFARM). Position 266 (H266) interacts with heme b.

It belongs to the peroxidase family. Peroxidase/catalase subfamily. Homodimer or homotetramer. The cofactor is heme b. In terms of processing, formation of the three residue Trp-Tyr-Met cross-link is important for the catalase, but not the peroxidase activity of the enzyme.

The enzyme catalyses H2O2 + AH2 = A + 2 H2O. It catalyses the reaction 2 H2O2 = O2 + 2 H2O. Functionally, bifunctional enzyme with both catalase and broad-spectrum peroxidase activity. In Shewanella putrefaciens (strain CN-32 / ATCC BAA-453), this protein is Catalase-peroxidase.